The following is a 146-amino-acid chain: Hemoglobin cathodic subunit beta (146 aa).

The region spanning 2-146 (EWSASERSTI…VVSALSKQYF (145 aa)) is the Globin domain. 2 residues coordinate heme b: H63 and H92.

It belongs to the globin family. Heterotetramer of two alpha chains and two beta chains. As to expression, red blood cells.

In terms of biological role, involved in oxygen transport from gills to the various peripheral tissues. The protein is Hemoglobin cathodic subunit beta (hbb2) of Anguilla anguilla (European freshwater eel).